A 145-amino-acid polypeptide reads, in one-letter code: Synaptojanin-2-binding protein (145 aa).

At 1–117 the chain is on the cytoplasmic side; the sequence is MNGRVDYLVT…GPQGEGEPSG (117 aa). The region spanning 13-100 is the PDZ domain; the sequence is EINLTRGPSG…AVSLRVQHRL (88 aa). The chain crosses the membrane as a helical; Anchor for type IV membrane protein span at residues 118–138; that stretch reads IPIAMVLVPVFALTMVAAWAF. Residues 139–145 lie on the Mitochondrial intermembrane side of the membrane; sequence MRYRQRL.

As to quaternary structure, binds (via the PDZ domain) to isoform 2A of SYNJ2 (via the unique motif in the C-terminus). Interacts (via C-terminus) with RALBP1. Interacts (via PDZ domain) with ACVR2A (via C-terminus) and ACVR2B (via C-terminus). Forms a ternary complex with ACVR2A and RALBP1. Interacts with MAPK12. Interacts with DLL1; enhances DLL1 protein stability, and promotes notch signaling in endothelial cells.

It localises to the mitochondrion outer membrane. The protein resides in the cytoplasm. It is found in the perinuclear region. In terms of biological role, regulates endocytosis of activin type 2 receptor kinases through the Ral/RALBP1-dependent pathway and may be involved in suppression of activin-induced signal transduction. This chain is Synaptojanin-2-binding protein, found in Bos taurus (Bovine).